The sequence spans 418 residues: L-rhamnose isomerase (418 aa).

His-262, Asp-294, and Asp-296 together coordinate Mn(2+).

It belongs to the rhamnose isomerase family. As to quaternary structure, homotetramer. Mn(2+) is required as a cofactor.

The protein resides in the cytoplasm. It carries out the reaction L-rhamnopyranose = L-rhamnulose. The protein operates within carbohydrate degradation; L-rhamnose degradation; glycerone phosphate from L-rhamnose: step 1/3. Functionally, catalyzes the interconversion of L-rhamnose and L-rhamnulose. In Yersinia pseudotuberculosis serotype IB (strain PB1/+), this protein is L-rhamnose isomerase.